The primary structure comprises 227 residues: DNA mismatch repair protein MutH (227 aa).

The protein belongs to the MutH family.

The protein localises to the cytoplasm. Sequence-specific endonuclease that cleaves unmethylated GATC sequences. It is involved in DNA mismatch repair. The protein is DNA mismatch repair protein MutH of Vibrio vulnificus (strain CMCP6).